A 355-amino-acid polypeptide reads, in one-letter code: Sesquiterpene synthase MAJ_08936 (355 aa).

Positions 91 and 96 each coordinate Mg(2+). The DDXXXD motif motif lies at 91 to 96 (DDLFVD). A substrate-binding site is contributed by Arg-184. Positions 230, 234, and 238 each coordinate Mg(2+).

The protein belongs to the terpene synthase family. Requires Mg(2+) as cofactor.

The enzyme catalyses (2E,6E)-farnesyl diphosphate + H2O = (+)-corvol ether B + diphosphate. The catalysed reaction is (2E,6E)-farnesyl diphosphate + H2O = (+)-corvol ether A + diphosphate. In terms of biological role, terpene synthase that catalyzes the conversion of (2E,6E)-farnesyl diphosphate (FPP) into sesquiterpenes which are important for fungi-environment interactions. Produces a mixture consisting of 8 sesquiterpenes including corvol ethers A and B, as well as traces of epizonarene, gamma-cadinene, delta-cadinene, alpha-cadinene, alpha-cadinol, and an unidentified sesquiterpene. The major product is corvol ether A. The sequence is that of Sesquiterpene synthase MAJ_08936 from Metarhizium majus (strain ARSEF 297).